The chain runs to 261 residues: Non-homologous end joining protein Ku 1 (261 aa).

The region spanning 12–171 (SFSLVAIPVQ…LITLHYSDEV (160 aa)) is the Ku domain.

Belongs to the prokaryotic Ku family. Homodimer. Interacts with LigD.

Its function is as follows. With LigD forms a non-homologous end joining (NHEJ) DNA repair enzyme, which repairs dsDNA breaks with reduced fidelity. Binds linear dsDNA with 5'- and 3'- overhangs but not closed circular dsDNA nor ssDNA. Recruits and stimulates the ligase activity of LigD. In Geotalea uraniireducens (strain Rf4) (Geobacter uraniireducens), this protein is Non-homologous end joining protein Ku 1.